Consider the following 343-residue polypeptide: Pseudaminic acid synthase (343 aa).

Residues 287–343 (SLYASKDIKKGEMFSEENVKSVRPSFGLHPKFYQELLGKKASKDIKFGDALKQGDFQ) enclose the AFP-like domain.

This sequence belongs to the pseudaminic acid synthase family. The cofactor is a divalent metal cation.

It carries out the reaction 2,4-diacetamido-2,4,6-trideoxy-beta-L-altrose + phosphoenolpyruvate + H2O = pseudaminate + phosphate. Its function is as follows. Catalyzes the fifth step in the biosynthesis of pseudaminic acid, a sialic-acid-like sugar that is used to modify flagellin. Catalyzes the condensation of phosphoenolpyruvate with 2,4-diacetamido-2,4,6-trideoxy-beta-l-altropyranose, forming pseudaminic acid. In Campylobacter jejuni subsp. jejuni serotype O:2 (strain ATCC 700819 / NCTC 11168), this protein is Pseudaminic acid synthase (pseI).